A 72-amino-acid chain; its full sequence is Translation initiation factor IF-1 (72 aa).

In terms of domain architecture, S1-like spans 1 to 72 (MAKEDNIEMQ…SKGRIVFRSR (72 aa)).

Belongs to the IF-1 family. As to quaternary structure, component of the 30S ribosomal translation pre-initiation complex which assembles on the 30S ribosome in the order IF-2 and IF-3, IF-1 and N-formylmethionyl-tRNA(fMet); mRNA recruitment can occur at any time during PIC assembly.

It is found in the cytoplasm. Its function is as follows. One of the essential components for the initiation of protein synthesis. Stabilizes the binding of IF-2 and IF-3 on the 30S subunit to which N-formylmethionyl-tRNA(fMet) subsequently binds. Helps modulate mRNA selection, yielding the 30S pre-initiation complex (PIC). Upon addition of the 50S ribosomal subunit IF-1, IF-2 and IF-3 are released leaving the mature 70S translation initiation complex. The protein is Translation initiation factor IF-1 of Salmonella paratyphi A (strain ATCC 9150 / SARB42).